A 134-amino-acid chain; its full sequence is Thioredoxin-like protein Clot (134 aa).

The 134-residue stretch at 1-134 (MTLKKVDANP…LILPLLAPST (134 aa)) folds into the Thioredoxin domain. Residues C48 and C51 each act as nucleophile in the active site. A disulfide bridge connects residues C48 and C51.

This sequence belongs to the thioredoxin family.

In terms of biological role, probable thiol-disulfide oxidoreductase that may participate in various redox reactions. The chain is Thioredoxin-like protein Clot from Arabidopsis thaliana (Mouse-ear cress).